Reading from the N-terminus, the 478-residue chain is Odorant receptor coreceptor (478 aa).

Residues 1-41 (MQVQPTKYVGLVADLMPNIRLMQASGHFLFRYVTGPILIRK) are Cytoplasmic-facing. A helical membrane pass occupies residues 42 to 62 (VYSWWTLAMVLIQFFAILGNL). The Extracellular portion of the chain corresponds to 63 to 73 (ATNADDVNELT). Residues 74–94 (ANTITTLFFTHSVTKFIYFAV) form a helical membrane-spanning segment. Over 95 to 133 (NSENFYRTLAIWNQTNTHPLFAESDARYHSIALAKMRKL) the chain is Cytoplasmic. Residues 134 to 154 (LVLVMATTVLSVVAWVTITFF) traverse the membrane as a helical segment. Topologically, residues 155–188 (GESVKTVLDKATNETYTVDIPRLPIKSWYPWNAM) are extracellular. Residue Asn-167 is glycosylated (N-linked (GlcNAc...) asparagine). A helical membrane pass occupies residues 189–209 (SGPAYIFSFIYQIYFLLFSMV). The Cytoplasmic segment spans residues 210-338 (QSNLADVMFC…AIKYWVERHK (129 aa)). A helical membrane pass occupies residues 339–361 (HVVRLVSAIGDTYGPALLLHMLT). The Extracellular segment spans residues 362–382 (STIKLTLLAYQATKIDGVNVY). The chain crosses the membrane as a helical span at residues 383–403 (GLTVIGYLCYALAQVFLFCIF). The Cytoplasmic segment spans residues 404–454 (GNRLIEESSSVMEAAYSCHWYDGSEEAKTFVQIVCQQCQKAMTISGAKFFT). The chain crosses the membrane as a helical span at residues 455-475 (VSLDLFASVLGAVVTYFMVLV). Residues 476 to 478 (QLK) are Extracellular-facing.

Belongs to the insect chemoreceptor superfamily. Heteromeric odorant receptor channel (TC 1.A.69) family. Orco subfamily. As to quaternary structure, heterodimer with conventional odorant receptors (ORs). Complexes exist early in the endomembrane system in olfactory sensory neurons (OSNs), coupling these complexes to the conserved ciliary trafficking pathway. Expressed in olfactory and gustatory organs of both adult and immature stages. Highest expression is seen in adult antennae and the maxillary palps. Lower expression also seen in proboscis and legs. Within the antenna, expression originates in cell bodies and projects into the lumen of an individual sensillum, presumably along the dendritic extension of the neuron. Within the maxillary palps, expression is seen in a small number of cell bodies and in projections into the sensillar cone. Within the probiscus, expression is seen in a single type of sensillum on the outer surface of the labellar lobes.

Its subcellular location is the cell membrane. Odorant coreceptor which complexes with conventional odorant receptors (ORs) to form odorant-sensing units, providing sensitive and prolonged odorant signaling and calcium permeability. Orco is a universal and integral part of the functional odorant receptor, involved in the dendritic localization of other olfactory receptors. Can form functional ion channels in the absence of an odor-binding OR. Plays a key role in preferred attraction of females for humans over non-human hosts for blood feeding. Human attraction plays a crucial role in the transmission of Plasmodium protozoans by the mosquito leading to infection diseases like malaria. Also required for the response to N,N-Diethyl-meta-toluamide (DEET), the most widely used insect repellent worldwide. In Anopheles gambiae (African malaria mosquito), this protein is Odorant receptor coreceptor (Orco).